A 117-amino-acid polypeptide reads, in one-letter code: Large ribosomal subunit protein uL18 (117 aa).

It belongs to the universal ribosomal protein uL18 family. In terms of assembly, part of the 50S ribosomal subunit; part of the 5S rRNA/L5/L18/L25 subcomplex. Contacts the 5S and 23S rRNAs.

Functionally, this is one of the proteins that bind and probably mediate the attachment of the 5S RNA into the large ribosomal subunit, where it forms part of the central protuberance. The chain is Large ribosomal subunit protein uL18 from Leuconostoc mesenteroides subsp. mesenteroides (strain ATCC 8293 / DSM 20343 / BCRC 11652 / CCM 1803 / JCM 6124 / NCDO 523 / NBRC 100496 / NCIMB 8023 / NCTC 12954 / NRRL B-1118 / 37Y).